The sequence spans 260 residues: Taurine import ATP-binding protein TauB (260 aa).

The region spanning 6–235 (AHQVSVVYAS…RYAAGESMRS (230 aa)) is the ABC transporter domain. Position 40-47 (40-47 (GASGCGKS)) interacts with ATP.

The protein belongs to the ABC transporter superfamily. Taurine importer (TC 3.A.1.17.1) family. The complex is composed of two ATP-binding proteins (TauB), two transmembrane proteins (TauC) and a solute-binding protein (TauA).

Its subcellular location is the cell inner membrane. The enzyme catalyses taurine(out) + ATP + H2O = taurine(in) + ADP + phosphate + H(+). In terms of biological role, part of the ABC transporter complex TauABC involved in taurine import. Responsible for energy coupling to the transport system. The polypeptide is Taurine import ATP-binding protein TauB (Burkholderia thailandensis (strain ATCC 700388 / DSM 13276 / CCUG 48851 / CIP 106301 / E264)).